The following is a 183-amino-acid chain: Apo-citrate lyase phosphoribosyl-dephospho-CoA transferase (183 aa).

This sequence belongs to the CitX family.

It carries out the reaction apo-[citrate lyase ACP] + 2'-(5''-triphospho-alpha-D-ribosyl)-3'-dephospho-CoA = holo-[citrate lyase ACP] + diphosphate. In terms of biological role, transfers 2-(5''-triphosphoribosyl)-3'-dephosphocoenzyme-A on a serine residue to the apo-acyl carrier protein (gamma chain) of the citrate lyase to yield holo-acyl carrier protein. This chain is Apo-citrate lyase phosphoribosyl-dephospho-CoA transferase, found in Escherichia coli O9:H4 (strain HS).